The sequence spans 264 residues: Ribosomal RNA small subunit methyltransferase A (264 aa).

Residues N12, L14, G39, E60, D83, and N103 each contribute to the S-adenosyl-L-methionine site.

Belongs to the class I-like SAM-binding methyltransferase superfamily. rRNA adenine N(6)-methyltransferase family. RsmA subfamily.

It is found in the cytoplasm. It catalyses the reaction adenosine(1518)/adenosine(1519) in 16S rRNA + 4 S-adenosyl-L-methionine = N(6)-dimethyladenosine(1518)/N(6)-dimethyladenosine(1519) in 16S rRNA + 4 S-adenosyl-L-homocysteine + 4 H(+). In terms of biological role, specifically dimethylates two adjacent adenosines (A1518 and A1519) in the loop of a conserved hairpin near the 3'-end of 16S rRNA in the 30S particle. May play a critical role in biogenesis of 30S subunits. The chain is Ribosomal RNA small subunit methyltransferase A from Syntrophotalea carbinolica (strain DSM 2380 / NBRC 103641 / GraBd1) (Pelobacter carbinolicus).